Reading from the N-terminus, the 132-residue chain is Small ribosomal subunit protein uS8 (132 aa).

This sequence belongs to the universal ribosomal protein uS8 family. In terms of assembly, part of the 30S ribosomal subunit. Contacts proteins S5 and S12.

Functionally, one of the primary rRNA binding proteins, it binds directly to 16S rRNA central domain where it helps coordinate assembly of the platform of the 30S subunit. This chain is Small ribosomal subunit protein uS8, found in Mycobacterium sp. (strain KMS).